The primary structure comprises 313 residues: D-alanine--D-alanine ligase (313 aa).

The region spanning Lys-108–Ser-308 is the ATP-grasp domain. Val-138 to Tyr-193 serves as a coordination point for ATP. Mg(2+)-binding residues include Asp-262, Glu-275, and Asn-277.

This sequence belongs to the D-alanine--D-alanine ligase family. Mg(2+) is required as a cofactor. Mn(2+) serves as cofactor.

The protein resides in the cytoplasm. It catalyses the reaction 2 D-alanine + ATP = D-alanyl-D-alanine + ADP + phosphate + H(+). Its pathway is cell wall biogenesis; peptidoglycan biosynthesis. Functionally, cell wall formation. The chain is D-alanine--D-alanine ligase from Burkholderia orbicola (strain MC0-3).